The chain runs to 152 residues: Deoxyuridine 5'-triphosphate nucleotidohydrolase (152 aa).

Residues Arg70 to Gly72, Asn83, Thr87 to Asp89, and Lys97 each bind substrate.

The protein belongs to the dUTPase family. The cofactor is Mg(2+).

The catalysed reaction is dUTP + H2O = dUMP + diphosphate + H(+). It participates in pyrimidine metabolism; dUMP biosynthesis; dUMP from dCTP (dUTP route): step 2/2. Functionally, this enzyme is involved in nucleotide metabolism: it produces dUMP, the immediate precursor of thymidine nucleotides and it decreases the intracellular concentration of dUTP so that uracil cannot be incorporated into DNA. This is Deoxyuridine 5'-triphosphate nucleotidohydrolase from Corynebacterium diphtheriae (strain ATCC 700971 / NCTC 13129 / Biotype gravis).